A 225-amino-acid chain; its full sequence is Ribose-5-phosphate isomerase A (225 aa).

Residues 26-29, 82-85, and 95-98 contribute to the substrate site; these read TGST, DGAD, and KGGG. Catalysis depends on Glu-104, which acts as the Proton acceptor. Lys-122 contacts substrate.

The protein belongs to the ribose 5-phosphate isomerase family. Homodimer.

It carries out the reaction aldehydo-D-ribose 5-phosphate = D-ribulose 5-phosphate. Its pathway is carbohydrate degradation; pentose phosphate pathway; D-ribose 5-phosphate from D-ribulose 5-phosphate (non-oxidative stage): step 1/1. Its function is as follows. Catalyzes the reversible conversion of ribose-5-phosphate to ribulose 5-phosphate. The sequence is that of Ribose-5-phosphate isomerase A from Streptococcus mutans serotype c (strain ATCC 700610 / UA159).